Consider the following 916-residue polypeptide: Internalin J (916 aa).

A signal peptide spans 1-25 (MKTSKIIIASLVSLTLVSNPILTFA). LRR repeat units follow at residues 94-115 (TLTSLDCHNSSIADMTGIEKLT), 116-136 (GLTKLICTYNNITTLDLSQNT), 137-157 (NLTYLACDSNKLTNLDVTPLT), 158-179 (KLTYLNCDTNKLTKIDVSQNPL), 180-200 (LTYLNCARNTLTEIDVSHNTQ), 201-221 (LTELDCHLNKKITKLDVTPQT), 222-243 (QLTTLDCSFNKITALDVSQNKL), 244-263 (LNRLNCDTNNITKLDLNQNI), 264-284 (QLTFLNCSSNKLTEIDVTPLT), 285-306 (QLTYFDCSVNPLTELDVSTLSK), 316-325 (DLLEIDLTHN), 338-357 (KIKELDVTHNTQLYLLDCQA), 359-368 (GITELDLSQN), and 380-402 (ELTKLDVSHNTKLKSLSCVNAHI). 5 MucBP domains span residues 506–568 (PIKG…SQSV), 576–638 (IVAA…SQTV), 646–708 (IVAA…AQTV), 717–779 (APEK…SQTV), and 787–849 (IVAA…AQTV). The interval 862–888 (PLPDKKTTKPSNLKTTEVKKASDTLPK) is disordered. An LPXTG sorting signal motif is present at residues 886 to 890 (LPKTG). Thr889 carries the pentaglycyl murein peptidoglycan amidated threonine modification. The propeptide at 890-916 (GDSTPWKSALLGVFLSSTALVIWKKKK) is removed by sortase.

This sequence belongs to the internalin family.

The protein resides in the secreted. The protein localises to the cell wall. Its function is as follows. Involved in several steps of L.monocytogenes infection, probably improves adhesin to host cells. This is Internalin J (inlJ) from Listeria monocytogenes serotype 4b (strain F2365).